The following is a 485-amino-acid chain: Noelin (485 aa).

The signal sequence occupies residues 1–16 (MSVPLLKIGVVLSTMA). Asn-33, Asn-103, Asn-187, Asn-288, Asn-307, Asn-394, Asn-431, and Asn-473 each carry an N-linked (GlcNAc...) asparagine glycan. Residues 87–225 (RDARTKQLRQ…ERLRACMQKL (139 aa)) are a coiled coil. The 253-residue stretch at 226–478 (ACGKLTGISD…QILYNVTLFH (253 aa)) folds into the Olfactomedin-like domain. An intrachain disulfide couples Cys-227 to Cys-409.

As to quaternary structure, homotetramer; disulfide-linked. Dimer of dimers, giving rise to a V-shaped homotretramer. Isoform 1 and isoform 3 interact with RTN4R. Identified in a complex with RTN4R and LINGO1. Peripherally associated with AMPAR complex. AMPAR complex consists of an inner core made of 4 pore-forming GluA/GRIA proteins (GRIA1, GRIA2, GRIA3 and GRIA4) and 4 major auxiliary subunits arranged in a twofold symmetry. One of the two pairs of distinct binding sites is occupied either by CNIH2, CNIH3 or CACNG2, CACNG3. The other harbors CACNG2, CACNG3, CACNG4, CACNG8 or GSG1L. This inner core of AMPAR complex is complemented by outer core constituents binding directly to the GluA/GRIA proteins at sites distinct from the interaction sites of the inner core constituents. Outer core constituents include at least PRRT1, PRRT2, CKAMP44/SHISA9, FRRS1L and NRN1. The proteins of the inner and outer core serve as a platform for other, more peripherally associated AMPAR constituents, including OLFM1. Alone or in combination, these auxiliary subunits control the gating and pharmacology of the AMPAR complex and profoundly impact their biogenesis and protein processing. Interacts with OLFM2.

The protein localises to the secreted. It is found in the synapse. The protein resides in the endoplasmic reticulum. It localises to the cell projection. Its subcellular location is the axon. The protein localises to the perikaryon. Functionally, contributes to the regulation of axonal growth in the embryonic and adult central nervous system by inhibiting interactions between RTN4R and LINGO1. Inhibits RTN4R-mediated axon growth cone collapse. May play an important role in regulating the production of neural crest cells by the neural tube. May be required for normal responses to olfactory stimuli. This chain is Noelin (OLFM1), found in Homo sapiens (Human).